The following is a 425-amino-acid chain: Serine--tRNA ligase (425 aa).

Residue 228–230 (TAE) coordinates L-serine. 259–261 (RSE) is an ATP binding site. Glu282 is a binding site for L-serine. An ATP-binding site is contributed by 346–349 (EIAS). An L-serine-binding site is contributed by Ser382.

The protein belongs to the class-II aminoacyl-tRNA synthetase family. Type-1 seryl-tRNA synthetase subfamily. In terms of assembly, homodimer. The tRNA molecule binds across the dimer.

Its subcellular location is the cytoplasm. The catalysed reaction is tRNA(Ser) + L-serine + ATP = L-seryl-tRNA(Ser) + AMP + diphosphate + H(+). The enzyme catalyses tRNA(Sec) + L-serine + ATP = L-seryl-tRNA(Sec) + AMP + diphosphate + H(+). The protein operates within aminoacyl-tRNA biosynthesis; selenocysteinyl-tRNA(Sec) biosynthesis; L-seryl-tRNA(Sec) from L-serine and tRNA(Sec): step 1/1. Catalyzes the attachment of serine to tRNA(Ser). Is also able to aminoacylate tRNA(Sec) with serine, to form the misacylated tRNA L-seryl-tRNA(Sec), which will be further converted into selenocysteinyl-tRNA(Sec). This chain is Serine--tRNA ligase, found in Rickettsia massiliae (strain Mtu5).